Consider the following 506-residue polypeptide: Maturase K (506 aa).

Belongs to the intron maturase 2 family. MatK subfamily.

It localises to the plastid. It is found in the chloroplast. In terms of biological role, usually encoded in the trnK tRNA gene intron. Probably assists in splicing its own and other chloroplast group II introns. The protein is Maturase K of Olea europaea (Common olive).